We begin with the raw amino-acid sequence, 160 residues long: 6,7-dimethyl-8-ribityllumazine synthase (160 aa).

5-amino-6-(D-ribitylamino)uracil contacts are provided by residues Trp27, 59–61 (AIE), and 81–83 (VVI). A (2S)-2-hydroxy-3-oxobutyl phosphate-binding site is contributed by 86-87 (ET). The Proton donor role is filled by His89. Asn114 is a binding site for 5-amino-6-(D-ribitylamino)uracil. Arg128 lines the (2S)-2-hydroxy-3-oxobutyl phosphate pocket.

Belongs to the DMRL synthase family. As to quaternary structure, homopentamer.

The catalysed reaction is (2S)-2-hydroxy-3-oxobutyl phosphate + 5-amino-6-(D-ribitylamino)uracil = 6,7-dimethyl-8-(1-D-ribityl)lumazine + phosphate + 2 H2O + H(+). The protein operates within cofactor biosynthesis; riboflavin biosynthesis; riboflavin from 2-hydroxy-3-oxobutyl phosphate and 5-amino-6-(D-ribitylamino)uracil: step 1/2. Catalyzes the formation of 6,7-dimethyl-8-ribityllumazine by condensation of 5-amino-6-(D-ribitylamino)uracil with 3,4-dihydroxy-2-butanone 4-phosphate. This is the penultimate step in the biosynthesis of riboflavin. This Mycobacterium ulcerans (strain Agy99) protein is 6,7-dimethyl-8-ribityllumazine synthase.